A 125-amino-acid polypeptide reads, in one-letter code: Large ribosomal subunit protein bL12 (125 aa).

This sequence belongs to the bacterial ribosomal protein bL12 family. Homodimer. Part of the ribosomal stalk of the 50S ribosomal subunit. Forms a multimeric L10(L12)X complex, where L10 forms an elongated spine to which 2 to 4 L12 dimers bind in a sequential fashion. Binds GTP-bound translation factors.

Its function is as follows. Forms part of the ribosomal stalk which helps the ribosome interact with GTP-bound translation factors. Is thus essential for accurate translation. This chain is Large ribosomal subunit protein bL12, found in Cereibacter sphaeroides (Rhodobacter sphaeroides).